The primary structure comprises 419 residues: MHKLIIHGGKPLKGSINISGAKNAVLPIMAASILTDKLHITNVPKLTDVGTMKDLLRSHGADIEIIEHQDEFELIINTENINNFTADYEIVRKMRASIWVLGPLLTKYGKAKVSLPGGCAIGARQVDLHIAVLKAMGATIEIEDGYINASSKGRLKGTHFVFDKVSVGATINAILAAVLTEGETVLFNCGREPEIVDLCNCLITMGADIAGIGTSEITIKGKDSLNKASYKVLSDRIEAGTYMFAAAITKGDVKICGIDYHIVENIALKLIETGIKVVPINNGVQVTYEGKLNSVDLETNPYPGFATDLQAQFMSLMTLSSGVSMITENIFENRFMHVPELCRMGADIVVRGNKAVVRGVEMLKGAEVMASDLRASVSLILAGLSTNSKTVLHRIYHLDRGFQDLEKKLSNCGADIKRV.

22 to 23 (KN) provides a ligand contact to phosphoenolpyruvate. Residue Arg-95 coordinates UDP-N-acetyl-alpha-D-glucosamine. Cys-119 functions as the Proton donor in the catalytic mechanism. Cys-119 bears the 2-(S-cysteinyl)pyruvic acid O-phosphothioketal mark. Residues 164-167 (KVSV), Asp-308, and Ile-330 contribute to the UDP-N-acetyl-alpha-D-glucosamine site.

Belongs to the EPSP synthase family. MurA subfamily.

It localises to the cytoplasm. It carries out the reaction phosphoenolpyruvate + UDP-N-acetyl-alpha-D-glucosamine = UDP-N-acetyl-3-O-(1-carboxyvinyl)-alpha-D-glucosamine + phosphate. Its pathway is cell wall biogenesis; peptidoglycan biosynthesis. Cell wall formation. Adds enolpyruvyl to UDP-N-acetylglucosamine. This Rickettsia massiliae (strain Mtu5) protein is UDP-N-acetylglucosamine 1-carboxyvinyltransferase.